A 320-amino-acid chain; its full sequence is Tyrosine recombinase XerC (320 aa).

A Core-binding (CB) domain is found at Ala-14–Glu-104. A Tyr recombinase domain is found at Arg-125–Glu-311. Residues Arg-170, Lys-195, His-263, Arg-266, and His-289 contribute to the active site. Tyr-298 serves as the catalytic O-(3'-phospho-DNA)-tyrosine intermediate.

Belongs to the 'phage' integrase family. XerC subfamily. In terms of assembly, forms a cyclic heterotetrameric complex composed of two molecules of XerC and two molecules of XerD.

Its subcellular location is the cytoplasm. Site-specific tyrosine recombinase, which acts by catalyzing the cutting and rejoining of the recombining DNA molecules. The XerC-XerD complex is essential to convert dimers of the bacterial chromosome into monomers to permit their segregation at cell division. It also contributes to the segregational stability of plasmids. The polypeptide is Tyrosine recombinase XerC (Methylobacterium sp. (strain 4-46)).